The chain runs to 337 residues: MNRVDYLRISLIDRCNFRCQYCMPEGAELDYILRQELLTHEELITLLKEVFIPLGFSKFRLTGGEPLLRPGIVDLVQDIASLPATEDLSMTTNGFLLSSLAEDLYQAGLKRINISLDSLNPDTFQTIIGHKKANMWQQTWLGIQTAYEVGFDPLKLNVVVIPGVNENEIEALAELSIHKNWHIRFIEFMPIGNPELFSDLEEIRFAGRAWVASEEIREKIRQKWGLIESNIKGNGPADVFKIPGAKGTVGFISQMSECFCDRCNRMRLSADGWLRPCLLNETGQIDLKTLLRSGISATNIRDKVAHLLTIKPDINYKQRDSGNDTGIYERTMSQIGG.

Residues 1–226 form the Radical SAM core domain; it reads MNRVDYLRIS…REKIRQKWGL (226 aa). Position 8 (arginine 8) interacts with GTP. 2 residues coordinate [4Fe-4S] cluster: cysteine 15 and cysteine 19. An S-adenosyl-L-methionine-binding site is contributed by tyrosine 21. Cysteine 22 serves as a coordination point for [4Fe-4S] cluster. Position 60 (arginine 60) interacts with GTP. Position 64 (glycine 64) interacts with S-adenosyl-L-methionine. Threonine 91 serves as a coordination point for GTP. Serine 115 contributes to the S-adenosyl-L-methionine binding site. Lysine 155 lines the GTP pocket. S-adenosyl-L-methionine is bound at residue methionine 189. Residues cysteine 260 and cysteine 263 each coordinate [4Fe-4S] cluster. Position 265–267 (265–267) interacts with GTP; sequence RMR. Cysteine 277 is a binding site for [4Fe-4S] cluster.

It belongs to the radical SAM superfamily. MoaA family. As to quaternary structure, monomer and homodimer. [4Fe-4S] cluster serves as cofactor.

It catalyses the reaction GTP + AH2 + S-adenosyl-L-methionine = (8S)-3',8-cyclo-7,8-dihydroguanosine 5'-triphosphate + 5'-deoxyadenosine + L-methionine + A + H(+). Its pathway is cofactor biosynthesis; molybdopterin biosynthesis. Catalyzes the cyclization of GTP to (8S)-3',8-cyclo-7,8-dihydroguanosine 5'-triphosphate. The polypeptide is GTP 3',8-cyclase (Crocosphaera subtropica (strain ATCC 51142 / BH68) (Cyanothece sp. (strain ATCC 51142))).